The primary structure comprises 261 residues: Enolase-phosphatase E1 (261 aa).

Mg(2+) contacts are provided by Asp16 and Glu18. Residues 153–154 (SS) and Lys187 contribute to the substrate site. Asp212 provides a ligand contact to Mg(2+).

This sequence belongs to the HAD-like hydrolase superfamily. MasA/MtnC family. As to quaternary structure, monomer. Requires Mg(2+) as cofactor.

The protein resides in the cytoplasm. The protein localises to the nucleus. The catalysed reaction is 5-methylsulfanyl-2,3-dioxopentyl phosphate + H2O = 1,2-dihydroxy-5-(methylsulfanyl)pent-1-en-3-one + phosphate. It participates in amino-acid biosynthesis; L-methionine biosynthesis via salvage pathway; L-methionine from S-methyl-5-thio-alpha-D-ribose 1-phosphate: step 3/6. The protein operates within amino-acid biosynthesis; L-methionine biosynthesis via salvage pathway; L-methionine from S-methyl-5-thio-alpha-D-ribose 1-phosphate: step 4/6. Bifunctional enzyme that catalyzes the enolization of 2,3-diketo-5-methylthiopentyl-1-phosphate (DK-MTP-1-P) into the intermediate 2-hydroxy-3-keto-5-methylthiopentenyl-1-phosphate (HK-MTPenyl-1-P), which is then dephosphorylated to form the acireductone 1,2-dihydroxy-3-keto-5-methylthiopentene (DHK-MTPene). In Homo sapiens (Human), this protein is Enolase-phosphatase E1.